The chain runs to 169 residues: Inorganic pyrophosphatase (169 aa).

The residue at position 1 (Met-1) is an N-formylmethionine. The substrate site is built by Lys-28, Arg-42, and Tyr-54. Residues Asp-64, Asp-69, and Asp-101 each contribute to the Mg(2+) site. Tyr-138 is a substrate binding site.

The protein belongs to the PPase family. Homohexamer. Mg(2+) is required as a cofactor.

It localises to the cytoplasm. It carries out the reaction diphosphate + H2O = 2 phosphate + H(+). Inhibited by ATP, but not by fructose 1,6-bisphosphate or 2-phosphoglycerate. Functionally, hydrolyzes PPi generated in anabolic reactions. In terms of biological role, catalyzes the hydrolysis of inorganic pyrophosphate (PPi) forming two phosphate ions. This Synechocystis sp. (strain ATCC 27184 / PCC 6803 / Kazusa) protein is Inorganic pyrophosphatase.